The sequence spans 291 residues: Probable cell wall amidase LytH (291 aa).

Residues 1–40 (MKKIEAWLSKKGLKNKRTLIVVIAFVLFIIFLFLLLNSNS) form the signal peptide. Residues 41-105 (EDSGNITITE…WIAGWHTNLD (65 aa)) form the SH3b domain. Positions 118-140 (QGKTIVLDPGHGGSDQGASSNTK) are disordered. A MurNAc-LAA domain is found at 122 to 286 (IVLDPGHGGS…LEQAIVDGLK (165 aa)).

Belongs to the N-acetylmuramoyl-L-alanine amidase 3 family.

Its subcellular location is the secreted. Its function is as follows. Probably involved in cell-wall metabolism. The chain is Probable cell wall amidase LytH (lytH) from Staphylococcus aureus (strain USA300).